We begin with the raw amino-acid sequence, 487 residues long: Glycogen synthase 1 (487 aa).

Lys15 lines the ADP-alpha-D-glucose pocket.

It belongs to the glycosyltransferase 1 family. Bacterial/plant glycogen synthase subfamily.

It carries out the reaction [(1-&gt;4)-alpha-D-glucosyl](n) + ADP-alpha-D-glucose = [(1-&gt;4)-alpha-D-glucosyl](n+1) + ADP + H(+). Its pathway is glycan biosynthesis; glycogen biosynthesis. Its function is as follows. Synthesizes alpha-1,4-glucan chains using ADP-glucose. The sequence is that of Glycogen synthase 1 from Nitrosococcus oceani (strain ATCC 19707 / BCRC 17464 / JCM 30415 / NCIMB 11848 / C-107).